The sequence spans 358 residues: Nicotinate-nucleotide--dimethylbenzimidazole phosphoribosyltransferase (358 aa).

Glu313 acts as the Proton acceptor in catalysis.

It belongs to the CobT family.

The enzyme catalyses 5,6-dimethylbenzimidazole + nicotinate beta-D-ribonucleotide = alpha-ribazole 5'-phosphate + nicotinate + H(+). It functions in the pathway nucleoside biosynthesis; alpha-ribazole biosynthesis; alpha-ribazole from 5,6-dimethylbenzimidazole: step 1/2. Its function is as follows. Catalyzes the synthesis of alpha-ribazole-5'-phosphate from nicotinate mononucleotide (NAMN) and 5,6-dimethylbenzimidazole (DMB). This Corynebacterium glutamicum (strain R) protein is Nicotinate-nucleotide--dimethylbenzimidazole phosphoribosyltransferase.